A 188-amino-acid chain; its full sequence is Probable chorismate pyruvate-lyase (188 aa).

Substrate-binding residues include R90, L128, and E175.

This sequence belongs to the UbiC family.

It is found in the cytoplasm. The enzyme catalyses chorismate = 4-hydroxybenzoate + pyruvate. Its pathway is cofactor biosynthesis; ubiquinone biosynthesis. Functionally, removes the pyruvyl group from chorismate, with concomitant aromatization of the ring, to provide 4-hydroxybenzoate (4HB) for the ubiquinone pathway. The sequence is that of Probable chorismate pyruvate-lyase from Marinobacter nauticus (strain ATCC 700491 / DSM 11845 / VT8) (Marinobacter aquaeolei).